We begin with the raw amino-acid sequence, 449 residues long: Clusterin (449 aa).

The signal sequence occupies residues 1 to 21; it reads MKTLLLLVGLLLTLENGQVLG. The short motif at 77–80 is the Nuclear localization signal element; that stretch reads KKKK. N-linked (GlcNAc...) asparagine glycosylation is found at Asn-85 and Asn-102. 5 cysteine pairs are disulfide-bonded: Cys-101–Cys-313, Cys-112–Cys-305, Cys-115–Cys-302, Cys-120–Cys-295, and Cys-128–Cys-285. Ser-132 is modified (phosphoserine). Asn-144, Asn-291, Asn-328, Asn-354, and Asn-374 each carry an N-linked (GlcNAc...) asparagine glycan. A Phosphoserine modification is found at Ser-396. Positions 443-447 match the Nuclear localization signal motif; that stretch reads RQKNR.

The protein belongs to the clusterin family. Antiparallel disulfide-linked heterodimer of an alpha chain and a beta chain. Self-associates and forms higher oligomers. Interacts with a broad range of misfolded proteins, including APP, APOC2 and LYZ. Slightly acidic pH promotes interaction with misfolded proteins. Forms high-molecular weight oligomers upon interaction with misfolded proteins. Interacts with APOA1, LRP2, CLUAP1 and PON1. Interacts with the complement membrane attack complex. Interacts (via alpha chain) with XRCC6. Interacts with SYVN1, COMMD1, BTRC, CUL1 and with ubiquitin and SCF (SKP1-CUL1-F-box protein) E3 ubiquitin-protein ligase complexes. Interacts (via alpha chain) with BAX in stressed cells, where BAX undergoes a conformation change leading to association with the mitochondrial membrane. Does not interact with BAX in unstressed cells. Found in a complex with LTF, CLU, EPPIN and SEMG1. Interacts (immaturely glycosylated pre-secreted form) with HSPA5; this interaction promotes CLU stability and facilitates stress-induced CLU retrotranslocation from the secretory pathway to the mitochondria, thereby reducing stress-induced apoptosis by stabilizing mitochondrial membrane integrity. Interacts with BCL2L1; this interaction releases and activates BAX and promotes cell death. Interacts with TGFBR2 and ACVR1. Interacts (secreted form) with STMN3; this interaction may act as an important modulator during neuronal differentiation. Interacts with VLDLR and LRP8. Proteolytically cleaved on its way through the secretory system, probably within the Golgi lumen. Proteolytic cleavage is not necessary for its chaperone activity. All non-secreted forms are not proteolytically cleaved. Chaperone activity of uncleaved forms is dependent on a non-reducing environment. In terms of processing, polyubiquitinated, leading to proteasomal degradation. Under cellular stress, the intracellular level of cleaved form is reduced due to proteasomal degradation. Post-translationally, heavily N-glycosylated. About 30% of the protein mass is comprised of complex N-linked carbohydrate. Endoplasmic reticulum (ER) stress induces changes in glycosylation status and increases level of hypoglycosylated forms. Core carbohydrates are essential for chaperone activity. Non-secreted forms are hypoglycosylated or unglycosylated.

The protein resides in the secreted. It is found in the nucleus. The protein localises to the cytoplasm. It localises to the mitochondrion membrane. Its subcellular location is the cytosol. The protein resides in the microsome. It is found in the endoplasmic reticulum. The protein localises to the mitochondrion. It localises to the perinuclear region. Its subcellular location is the cytoplasmic vesicle. The protein resides in the secretory vesicle. It is found in the chromaffin granule. Functionally, functions as extracellular chaperone that prevents aggregation of non native proteins. Prevents stress-induced aggregation of blood plasma proteins. Inhibits formation of amyloid fibrils by APP, APOC2, B2M, CALCA, CSN3, SNCA and aggregation-prone LYZ variants (in vitro). Does not require ATP. Maintains partially unfolded proteins in a state appropriate for subsequent refolding by other chaperones, such as HSPA8/HSC70. Does not refold proteins by itself. Binding to cell surface receptors triggers internalization of the chaperone-client complex and subsequent lysosomal or proteasomal degradation. When secreted, protects cells against apoptosis and against cytolysis by complement: inhibits assembly of the complement membrane attack complex (MAC) by preventing polymerization of C9 pore component of the MAC complex. Intracellular forms interact with ubiquitin and SCF (SKP1-CUL1-F-box protein) E3 ubiquitin-protein ligase complexes and promote the ubiquitination and subsequent proteasomal degradation of target proteins. Promotes proteasomal degradation of COMMD1 and IKBKB. Modulates NF-kappa-B transcriptional activity. Following stress, promotes apoptosis. Inhibits apoptosis when associated with the mitochondrial membrane by interference with BAX-dependent release of cytochrome c into the cytoplasm. Plays a role in the regulation of cell proliferation. An intracellular form suppresses stress-induced apoptosis by stabilizing mitochondrial membrane integrity through interaction with HSPA5. Secreted form does not affect caspase or BAX-mediated intrinsic apoptosis and TNF-induced NF-kappa-B-activity. Secreted form act as an important modulator during neuronal differentiation through interaction with STMN3. Plays a role in the clearance of immune complexes that arise during cell injury. This chain is Clusterin (CLU), found in Equus caballus (Horse).